An 81-amino-acid chain; its full sequence is Sulfur carrier protein TusA (81 aa).

Cysteine 19 functions as the Cysteine persulfide intermediate in the catalytic mechanism.

This sequence belongs to the sulfur carrier protein TusA family.

It is found in the cytoplasm. Its function is as follows. Sulfur carrier protein which probably makes part of a sulfur-relay system. This is Sulfur carrier protein TusA from Shewanella sp. (strain ANA-3).